A 54-amino-acid chain; its full sequence is Relaxin (54 aa).

Residue Gln1 is modified to Pyrrolidone carboxylic acid. Disulfide bonds link Cys10-Cys41, Cys22-Cys54, and Cys40-Cys45.

This sequence belongs to the insulin family. Heterodimer of a B chain and an A chain linked by two disulfide bonds.

Its subcellular location is the secreted. Functionally, relaxin is an ovarian hormone that acts with estrogen to produce dilatation of the birth canal in many mammals. The chain is Relaxin from Balaenoptera acutorostrata (Common minke whale).